Here is a 277-residue protein sequence, read N- to C-terminus: Energy-coupling factor transporter ATP-binding protein EcfA1 (277 aa).

In terms of domain architecture, ABC transporter spans 4-238 (IETKNLNYSY…SELLSKNDLK (235 aa)). 38–45 (GKNGSGKS) is an ATP binding site.

It belongs to the ABC transporter superfamily. Energy-coupling factor EcfA family. In terms of assembly, forms a stable energy-coupling factor (ECF) transporter complex composed of 2 membrane-embedded substrate-binding proteins (S component), 2 ATP-binding proteins (A component) and 2 transmembrane proteins (T component).

The protein resides in the cell membrane. ATP-binding (A) component of a common energy-coupling factor (ECF) ABC-transporter complex. Unlike classic ABC transporters this ECF transporter provides the energy necessary to transport a number of different substrates. This Oenococcus oeni (strain ATCC BAA-331 / PSU-1) protein is Energy-coupling factor transporter ATP-binding protein EcfA1.